A 300-amino-acid polypeptide reads, in one-letter code: MNDTTATRCGYVAIVGRPNVGKSTLLNHILGQKLAITSRKPQTTRHNMLGIKTEGTVQAIYVDTPGMHKNGEKALNRYMNKTASAALKDVDVVIFVVDRTRWTDEDQMVLERVQYVQGPVILAINKTDRIEDKSDLMPHLEWLQGQLPNASIVPISAQHGHNLEALESLIASHLPENDHFFPEDQITDRSSRFLAAELVREKIMRQLGAELPYQITVEIEEFKQQGRTLHIHALILVERDGQKKIIIGDKGDRIKRIGSDARRDMEVLFDSKVMLNLWVKVKGGWSDDERALRSLGYGDL.

Positions 8–176 (RCGYVAIVGR…ESLIASHLPE (169 aa)) constitute an Era-type G domain. Residues 16-23 (GRPNVGKS) form a G1 region. Position 16–23 (16–23 (GRPNVGKS)) interacts with GTP. Residues 42–46 (QTTRH) form a G2 region. The tract at residues 63–66 (DTPG) is G3. GTP is bound by residues 63 to 67 (DTPGM) and 125 to 128 (NKTD). The segment at 125–128 (NKTD) is G4. The segment at 155–157 (ISA) is G5. A KH type-2 domain is found at 199-283 (VREKIMRQLG…MLNLWVKVKG (85 aa)).

Belongs to the TRAFAC class TrmE-Era-EngA-EngB-Septin-like GTPase superfamily. Era GTPase family. In terms of assembly, monomer.

It is found in the cytoplasm. Its subcellular location is the cell inner membrane. In terms of biological role, an essential GTPase that binds both GDP and GTP, with rapid nucleotide exchange. Plays a role in 16S rRNA processing and 30S ribosomal subunit biogenesis and possibly also in cell cycle regulation and energy metabolism. The chain is GTPase Era from Pseudomonas syringae pv. tomato (strain ATCC BAA-871 / DC3000).